The chain runs to 303 residues: UDP-3-O-acyl-N-acetylglucosamine deacetylase (303 aa).

Residues His78, His237, and Asp241 each contribute to the Zn(2+) site. Residue His264 is the Proton donor of the active site.

Belongs to the LpxC family. Zn(2+) serves as cofactor.

It catalyses the reaction a UDP-3-O-[(3R)-3-hydroxyacyl]-N-acetyl-alpha-D-glucosamine + H2O = a UDP-3-O-[(3R)-3-hydroxyacyl]-alpha-D-glucosamine + acetate. It participates in glycolipid biosynthesis; lipid IV(A) biosynthesis; lipid IV(A) from (3R)-3-hydroxytetradecanoyl-[acyl-carrier-protein] and UDP-N-acetyl-alpha-D-glucosamine: step 2/6. Catalyzes the hydrolysis of UDP-3-O-myristoyl-N-acetylglucosamine to form UDP-3-O-myristoylglucosamine and acetate, the committed step in lipid A biosynthesis. This is UDP-3-O-acyl-N-acetylglucosamine deacetylase from Xanthomonas oryzae pv. oryzae (strain MAFF 311018).